A 156-amino-acid polypeptide reads, in one-letter code: Small ribosomal subunit protein eS19A (156 aa).

This sequence belongs to the eukaryotic ribosomal protein eS19 family.

This chain is Small ribosomal subunit protein eS19A (RpS19a), found in Drosophila melanogaster (Fruit fly).